Consider the following 208-residue polypeptide: ATP-dependent Clp protease proteolytic subunit (208 aa).

Residue Ser-112 is the Nucleophile of the active site. Residue His-137 is part of the active site.

It belongs to the peptidase S14 family. In terms of assembly, fourteen ClpP subunits assemble into 2 heptameric rings which stack back to back to give a disk-like structure with a central cavity, resembling the structure of eukaryotic proteasomes.

The protein localises to the cytoplasm. The enzyme catalyses Hydrolysis of proteins to small peptides in the presence of ATP and magnesium. alpha-casein is the usual test substrate. In the absence of ATP, only oligopeptides shorter than five residues are hydrolyzed (such as succinyl-Leu-Tyr-|-NHMec, and Leu-Tyr-Leu-|-Tyr-Trp, in which cleavage of the -Tyr-|-Leu- and -Tyr-|-Trp bonds also occurs).. Functionally, cleaves peptides in various proteins in a process that requires ATP hydrolysis. Has a chymotrypsin-like activity. Plays a major role in the degradation of misfolded proteins. This chain is ATP-dependent Clp protease proteolytic subunit, found in Buchnera aphidicola subsp. Acyrthosiphon pisum (strain APS) (Acyrthosiphon pisum symbiotic bacterium).